Reading from the N-terminus, the 286-residue chain is Ribosomal RNA small subunit methyltransferase A (286 aa).

S-adenosyl-L-methionine-binding residues include N33, V35, G60, E81, D111, and N129.

The protein belongs to the class I-like SAM-binding methyltransferase superfamily. rRNA adenine N(6)-methyltransferase family. RsmA subfamily.

The protein resides in the cytoplasm. It catalyses the reaction adenosine(1518)/adenosine(1519) in 16S rRNA + 4 S-adenosyl-L-methionine = N(6)-dimethyladenosine(1518)/N(6)-dimethyladenosine(1519) in 16S rRNA + 4 S-adenosyl-L-homocysteine + 4 H(+). In terms of biological role, specifically dimethylates two adjacent adenosines (A1518 and A1519) in the loop of a conserved hairpin near the 3'-end of 16S rRNA in the 30S particle. May play a critical role in biogenesis of 30S subunits. This Streptomyces coelicolor (strain ATCC BAA-471 / A3(2) / M145) protein is Ribosomal RNA small subunit methyltransferase A.